The primary structure comprises 366 residues: D-alanine--D-alanine ligase (366 aa).

Residues 146 to 352 (KICFEHAGLQ…YTELINRLIE (207 aa)) form the ATP-grasp domain. 179 to 234 (EKKLRYPMFVKPANMGSSVGISKAHNRNELIEAIELALAYDRKFLIEKAINAREME) lines the ATP pocket. Residues aspartate 305, glutamate 319, and asparagine 321 each contribute to the Mg(2+) site.

Belongs to the D-alanine--D-alanine ligase family. Requires Mg(2+) as cofactor. Mn(2+) serves as cofactor.

It is found in the cytoplasm. It catalyses the reaction 2 D-alanine + ATP = D-alanyl-D-alanine + ADP + phosphate + H(+). Its pathway is cell wall biogenesis; peptidoglycan biosynthesis. Functionally, cell wall formation. This chain is D-alanine--D-alanine ligase, found in Chloroherpeton thalassium (strain ATCC 35110 / GB-78).